Here is a 331-residue protein sequence, read N- to C-terminus: Zinc finger protein 660 (331 aa).

Basic residues predominate over residues 1 to 12 (MRRKTRNFKHKT). The tract at residues 1–35 (MRRKTRNFKHKTVKDNKVLTEGSDQESEKDNSQCC) is disordered. At Ser23 the chain carries Phosphoserine. 10 C2H2-type zinc fingers span residues 50 to 72 (YVCTECGKAFSQSANLTVHERIH), 78 to 100 (YKCKECGKAFSHSSNLVVHRRIH), 106 to 128 (YTCSECGKSFSGKSHLIRHQGIH), 134 to 156 (YECKECGKAFSRSSGLISHHRVH), 162 to 184 (YSCIECGKAFSRSSNLTQHQRMH), 190 to 212 (YKCKECGKTCGSNTKIMDHQRIH), 218 to 240 (YECDECGKTFILRKTLNEHQRLH), 246 to 268 (YKCNECGKAFTSNRNLVDHQRVH), 274 to 296 (YKCNECGKTFRQTSQVILHLRTH), and 302 to 324 (YKCSECGKAYRYSSQLIQHQRKH).

The protein belongs to the krueppel C2H2-type zinc-finger protein family.

The protein localises to the nucleus. Functionally, may be involved in transcriptional regulation. The polypeptide is Zinc finger protein 660 (ZNF660) (Homo sapiens (Human)).